The primary structure comprises 135 residues: C-type lectin Cal (135 aa).

4 cysteine pairs are disulfide-bonded: cysteine 3–cysteine 14, cysteine 31–cysteine 131, cysteine 38–cysteine 133, and cysteine 106–cysteine 123. The 123-residue stretch at 10–132 (MNGLCYKIFN…CESKDAFLCQ (123 aa)) folds into the C-type lectin domain. Residues glutamine 96, aspartate 98, glutamate 104, asparagine 119, and aspartate 120 each coordinate Ca(2+). The short motif at 96-98 (QPD) is the Galactose-binding element.

This sequence belongs to the true venom lectin family. In terms of assembly, homodecamer of disulfide-linked dimers arranged in two pseudo-5-fold symmetric pentamers. In terms of tissue distribution, expressed by the venom gland.

The protein resides in the secreted. Functionally, galactose-binding protein which recognizes specific carbohydrate structures and agglutinates a variety of animal cells by binding to cell-surface glycoproteins and glycolipids. Calcium-dependent lectin. Shows high hemagglutinating activity (MHC=10 ng/ml). The protein is C-type lectin Cal of Crotalus atrox (Western diamondback rattlesnake).